The chain runs to 308 residues: SAP30-binding protein (308 aa).

Positions 15 to 101 (AEDSEPESDG…EAEKRDPQEL (87 aa)) are disordered. A compositionally biased stretch (acidic residues) spans 16 to 26 (EDSEPESDGEA). 4 positions are modified to phosphoserine: Ser18, Ser22, Ser43, and Ser52. Acidic residues predominate over residues 57-78 (DEDGYEEEEDENSRQSEDDDSE). Basic and acidic residues predominate over residues 79–99 (TEKPEADDPKDNTEAEKRDPQ). Lys95 participates in a covalent cross-link: Glycyl lysine isopeptide (Lys-Gly) (interchain with G-Cter in SUMO2). Ser113 is subject to Phosphoserine. Glycyl lysine isopeptide (Lys-Gly) (interchain with G-Cter in SUMO2) cross-links involve residues Lys220, Lys304, and Lys305.

Belongs to the HCNGP family. Interacts with histone deacetylase complex subunit SAP30.

It localises to the nucleus. Plays a role in transcriptional repression by promoting histone deacetylase activity, leading to deacetylation of histone H3. May be involved in the regulation of beta-2-microglobulin genes. Functionally, (Microbial infection) Involved in transcriptional repression of HHV-1 genes TK and gC. In Homo sapiens (Human), this protein is SAP30-binding protein.